Here is a 677-residue protein sequence, read N- to C-terminus: UvrABC system protein B (677 aa).

A Helicase ATP-binding domain is found at 24 to 412 (EGVLEGVPAQ…EGIVVEQVIR (389 aa)). ATP is bound at residue 37 to 44 (GVTGSGKT). A Beta-hairpin motif is present at residues 90–113 (YYDYYQPEAYLPSSDTYIEKDLAI). The 163-residue stretch at 429–591 (QIDDLMEEIQ…ITPQQIKKAR (163 aa)) folds into the Helicase C-terminal domain. The UVR domain maps to 635-670 (EKSMERTRKLMQEAAKKLEFIEAAQYRDELLKMEDL).

Belongs to the UvrB family. Forms a heterotetramer with UvrA during the search for lesions. Interacts with UvrC in an incision complex.

It localises to the cytoplasm. Functionally, the UvrABC repair system catalyzes the recognition and processing of DNA lesions. A damage recognition complex composed of 2 UvrA and 2 UvrB subunits scans DNA for abnormalities. Upon binding of the UvrA(2)B(2) complex to a putative damaged site, the DNA wraps around one UvrB monomer. DNA wrap is dependent on ATP binding by UvrB and probably causes local melting of the DNA helix, facilitating insertion of UvrB beta-hairpin between the DNA strands. Then UvrB probes one DNA strand for the presence of a lesion. If a lesion is found the UvrA subunits dissociate and the UvrB-DNA preincision complex is formed. This complex is subsequently bound by UvrC and the second UvrB is released. If no lesion is found, the DNA wraps around the other UvrB subunit that will check the other stand for damage. The protein is UvrABC system protein B of Bacteroides fragilis (strain ATCC 25285 / DSM 2151 / CCUG 4856 / JCM 11019 / LMG 10263 / NCTC 9343 / Onslow / VPI 2553 / EN-2).